Reading from the N-terminus, the 588-residue chain is Acid beta-fructofuranosidase 1, vacuolar (588 aa).

Over 1 to 31 the chain is Cytoplasmic; the sequence is MDTSTSAYAPLPGEDPLFSGHPPASLRRSWK. A propeptide spans 1 to 115 (removed in mature form); the sequence is MDTSTSAYAP…LSYNWTNAMF (115 aa). Residues 32–52 form a helical; Signal-anchor for type II membrane protein membrane-spanning segment; it reads GFAVIFASVLFLLSLVGLIIH. Over 53 to 588 the chain is Lumenal; it reads QGPQQPPDVM…LRALRKEVGR (536 aa). Positions 57-86 are disordered; sequence QPPDVMPDKQDEHHHPQSTTPASETTASWE. Residues 62–71 show a composition bias toward basic and acidic residues; that stretch reads MPDKQDEHHH. The segment covering 73–84 has biased composition (polar residues); sequence QSTTPASETTAS. Residues 130–133, glutamine 149, and tryptophan 157 contribute to the substrate site; that span reads WMND. Aspartate 133 is a catalytic residue. N-linked (GlcNAc...) asparagine glycosylation occurs at asparagine 159. Residue 192–193 coordinates substrate; it reads WS. N-linked (GlcNAc...) asparagine glycosylation occurs at asparagine 226. Substrate is bound by residues 256 to 257, glutamate 311, and aspartate 344; that span reads RD. A disulfide bond links cysteine 499 and cysteine 545.

This sequence belongs to the glycosyl hydrolase 32 family. In terms of assembly, monomer. May be present in two forms, a 70 kDa monomer and a heterodimer of the 30 kDa and 38 kDa subunits. The ratio of the levels of the two forms within cells appears to be regulated developmentally. Glycosylated. Expressed in buds, stems, roots and leaves. Expressed in the epidermal cells of young leaves and of primordial leaves.

Its subcellular location is the membrane. The protein localises to the vacuole lumen. It catalyses the reaction Hydrolysis of terminal non-reducing beta-D-fructofuranoside residues in beta-D-fructofuranosides.. Functionally, acidic vacuolar invertase involved in light-induced bud burst. This is Acid beta-fructofuranosidase 1, vacuolar from Rosa hybrid cultivar.